Reading from the N-terminus, the 294-residue chain is tRNA dimethylallyltransferase (294 aa).

11–18 provides a ligand contact to ATP; that stretch reads GPTAVGKT. 13–18 lines the substrate pocket; sequence TAVGKT. The tract at residues 36-39 is interaction with substrate tRNA; it reads DSQQ.

Belongs to the IPP transferase family. Monomer. Mg(2+) serves as cofactor.

It catalyses the reaction adenosine(37) in tRNA + dimethylallyl diphosphate = N(6)-dimethylallyladenosine(37) in tRNA + diphosphate. In terms of biological role, catalyzes the transfer of a dimethylallyl group onto the adenine at position 37 in tRNAs that read codons beginning with uridine, leading to the formation of N6-(dimethylallyl)adenosine (i(6)A). The protein is tRNA dimethylallyltransferase of Lactococcus lactis subsp. lactis (strain IL1403) (Streptococcus lactis).